Consider the following 393-residue polypeptide: Formate-dependent phosphoribosylglycinamide formyltransferase (393 aa).

N(1)-(5-phospho-beta-D-ribosyl)glycinamide contacts are provided by residues 20-21 (EL) and glutamate 80. ATP contacts are provided by residues arginine 112, lysine 153, 158-163 (SSGKGQ), 193-196 (EAFI), and glutamate 201. Residues 117 to 306 (RLAAEDLNLP…EFELHVRAVL (190 aa)) form the ATP-grasp domain. 2 residues coordinate Mg(2+): glutamate 265 and glutamate 277. Residues aspartate 284, lysine 354, and 361-362 (RR) contribute to the N(1)-(5-phospho-beta-D-ribosyl)glycinamide site.

Belongs to the PurK/PurT family. Homodimer.

It catalyses the reaction N(1)-(5-phospho-beta-D-ribosyl)glycinamide + formate + ATP = N(2)-formyl-N(1)-(5-phospho-beta-D-ribosyl)glycinamide + ADP + phosphate + H(+). It participates in purine metabolism; IMP biosynthesis via de novo pathway; N(2)-formyl-N(1)-(5-phospho-D-ribosyl)glycinamide from N(1)-(5-phospho-D-ribosyl)glycinamide (formate route): step 1/1. In terms of biological role, involved in the de novo purine biosynthesis. Catalyzes the transfer of formate to 5-phospho-ribosyl-glycinamide (GAR), producing 5-phospho-ribosyl-N-formylglycinamide (FGAR). Formate is provided by PurU via hydrolysis of 10-formyl-tetrahydrofolate. The protein is Formate-dependent phosphoribosylglycinamide formyltransferase of Syntrophotalea carbinolica (strain DSM 2380 / NBRC 103641 / GraBd1) (Pelobacter carbinolicus).